We begin with the raw amino-acid sequence, 603 residues long: ABC transporter E family member 1 (603 aa).

4Fe-4S ferredoxin-type domains follow at residues 7-39 (RIAI…KLCI) and 46-75 (KSAF…IINL). ABC transporter domains are found at residues 70 to 315 (IQII…FLAG) and 344 to 566 (VKSY…LSHL). ATP is bound by residues 110–117 (GTNGIGKS) and 381–388 (GENGTGKT).

It belongs to the ABC transporter superfamily. ABCE family. As to expression, expressed in roots, stems, leaves, flowers and siliques.

The protein resides in the membrane. The protein is ABC transporter E family member 1 (ABCE1) of Arabidopsis thaliana (Mouse-ear cress).